The following is a 246-amino-acid chain: UDP-N-acetyl-D-mannosaminuronic acid transferase (246 aa).

It belongs to the glycosyltransferase 26 family.

It carries out the reaction UDP-N-acetyl-alpha-D-mannosaminouronate + N-acetyl-alpha-D-glucosaminyl-di-trans,octa-cis-undecaprenyl diphosphate = beta-D-ManNAcA-(1-&gt;4)-alpha-D-GlcNAc-di-trans,octa-cis-undecaprenyl diphosphate + UDP + H(+). Its pathway is bacterial outer membrane biogenesis; enterobacterial common antigen biosynthesis. Its function is as follows. Catalyzes the synthesis of Und-PP-GlcNAc-ManNAcA (Lipid II), the second lipid-linked intermediate involved in enterobacterial common antigen (ECA) synthesis. This is UDP-N-acetyl-D-mannosaminuronic acid transferase from Escherichia coli O7:K1 (strain IAI39 / ExPEC).